Here is a 226-residue protein sequence, read N- to C-terminus: uncharacterized protein (226 aa).

A coiled-coil region spans residues 121-163; that stretch reads TVDELIKTIEKELNKVKKSRKNREKKTNEVEEIIEELIEEDDI.

This is an uncharacterized protein from Methanocaldococcus jannaschii (strain ATCC 43067 / DSM 2661 / JAL-1 / JCM 10045 / NBRC 100440) (Methanococcus jannaschii).